A 293-amino-acid polypeptide reads, in one-letter code: MAAVIKKVGVIGAGQMGNGIAHVAALAGFDVVLNDVSADRLKSGMATINGNLARQVSKKVVTEEAKTKALSRIVAAEKLDDLADCDLVIETAVEKEEVKRKIFHELCAVLKPEAIVASDTSSISITRLAAATDRPERFIGIHFMNPVPLMELVELIRGIATDDATFEASKEFVAKLGKQVAVSEDFPAFIVNRILLPMINEAIYTLYEGVGNVEAIDAAMKLGAHHPMGPLELADFIGLDTCLSIMQVLHEGLADSKYRPCPLLVKYVEAGWLGRKTQRGFYDYRGAKPVPTR.

Belongs to the 3-hydroxyacyl-CoA dehydrogenase family.

The catalysed reaction is (3S)-3-hydroxybutanoyl-CoA + NADP(+) = acetoacetyl-CoA + NADPH + H(+). The protein operates within lipid metabolism; butanoate metabolism. The sequence is that of 3-hydroxybutyryl-CoA dehydrogenase (hbdA) from Bradyrhizobium diazoefficiens (strain JCM 10833 / BCRC 13528 / IAM 13628 / NBRC 14792 / USDA 110).